We begin with the raw amino-acid sequence, 456 residues long: Keratin, type I cuticular Ha8 (456 aa).

The tract at residues 1-104 (MTSSYSSSSC…YGENTLNGHE (104 aa)) is head. The IF rod domain maps to 104–415 (EKETMQFLND…NLLESEDCKL (312 aa)). The coil 1A stretch occupies residues 105-139 (KETMQFLNDRLANYLEKVRQLEQENAELEATLLER). The interval 140 to 150 (SKCHESTVCPD) is linker 1. A coil 1B region spans residues 151–251 (YQSYFHTIEE…HEQEVKILRS (101 aa)). The linker 12 stretch occupies residues 252-267 (QLGEKLRIELDIEPTI). The segment at 268–411 (DLNRVLGEMR…ATYRNLLESE (144 aa)) is coil 2. The tail stretch occupies residues 412–456 (DCKLPCNPCSTSPSCVTAPCAPRPSCGPCTTCGPTCGASTTGSRF).

This sequence belongs to the intermediate filament family.

In Homo sapiens (Human), this protein is Keratin, type I cuticular Ha8 (KRT38).